A 370-amino-acid polypeptide reads, in one-letter code: tRNA-specific 2-thiouridylase MnmA (370 aa).

Residues 19–26 (AMSGGVDS) and leucine 45 each bind ATP. The Nucleophile role is filled by cysteine 113. A disulfide bridge connects residues cysteine 113 and cysteine 209. ATP is bound at residue glycine 137. The segment at 159 to 161 (KDQ) is interaction with tRNA. Cysteine 209 serves as the catalytic Cysteine persulfide intermediate.

It belongs to the MnmA/TRMU family.

Its subcellular location is the cytoplasm. It carries out the reaction S-sulfanyl-L-cysteinyl-[protein] + uridine(34) in tRNA + AH2 + ATP = 2-thiouridine(34) in tRNA + L-cysteinyl-[protein] + A + AMP + diphosphate + H(+). Functionally, catalyzes the 2-thiolation of uridine at the wobble position (U34) of tRNA, leading to the formation of s(2)U34. The polypeptide is tRNA-specific 2-thiouridylase MnmA (Rickettsia conorii (strain ATCC VR-613 / Malish 7)).